A 130-amino-acid chain; its full sequence is Small ribosomal subunit protein uS8 (130 aa).

The protein belongs to the universal ribosomal protein uS8 family.

The protein is Small ribosomal subunit protein uS8 (RPS22) of Candida glabrata (strain ATCC 2001 / BCRC 20586 / JCM 3761 / NBRC 0622 / NRRL Y-65 / CBS 138) (Yeast).